Reading from the N-terminus, the 432-residue chain is Metacaspase-1 (432 aa).

Composition is skewed to low complexity over residues 1 to 14 (MYPG…NNAG) and 29 to 59 (QQYG…SQQY). A disordered region spans residues 1 to 70 (MYPGSGRYTY…PPPGPPPMAY (70 aa)). Pro residues predominate over residues 60–70 (APPPGPPPMAY). Residues histidine 220 and cysteine 276 contribute to the active site.

Belongs to the peptidase C14B family.

It localises to the cytoplasm. The protein resides in the nucleus. In terms of biological role, mediates cell death (apoptosis) triggered by oxygen stress, salt stress or chronological aging. Regulated cell death can prevent a release of toxic cellular components, thus avoiding necrotic collapse of the colony, and can also provide nutrients for healthy cells. Therefore, regulated cell death in yeast colonies can be as important for their development as are apoptosis and related processes that occur within metazoa. The chain is Metacaspase-1 (MCA1) from Saccharomyces cerevisiae (strain YJM789) (Baker's yeast).